Reading from the N-terminus, the 225-residue chain is MRLGKPKGGISRSSSQGKVYENQRKTGRQRQRWGMTVRFDSSLRRLRRGLDEKPYKCVECEKSFSQSSTLFQHQKIHTGKKSHKCADCGKSFFQSSNLIQHRRVHTGEKPYRCDECGERFKQSSNLIQHQRIHTGEKPYQCDECGRCFSQSSHLIQHQRTHTGEKPYQCSECGKCFSQSSHLRQHTKVHEEEKPRKTRGRSLRAKTHSLSSWKAGKGRRSAAGLR.

Residues 1-35 (MRLGKPKGGISRSSSQGKVYENQRKTGRQRQRWGM) are disordered. At K18 the chain carries N6-acetyllysine. C2H2-type zinc fingers lie at residues 55–77 (YKCV…QKIH), 83–105 (HKCA…RRVH), 111–133 (YRCD…QRIH), 139–161 (YQCD…QRTH), and 167–189 (YQCS…TKVH). The disordered stretch occupies residues 183-225 (RQHTKVHEEEKPRKTRGRSLRAKTHSLSSWKAGKGRRSAAGLR). The span at 195–206 (RKTRGRSLRAKT) shows a compositional bias: basic residues.

This sequence belongs to the krueppel C2H2-type zinc-finger protein family.

It is found in the nucleus. Binds DNA through the consensus sequence 5'-CAATG-3'. May be involved in transcriptional regulation and may play a role in tooth formation. The polypeptide is Zinc finger protein 22 (ZNF22) (Bos taurus (Bovine)).